A 362-amino-acid polypeptide reads, in one-letter code: uncharacterized protein (362 aa).

Disordered regions lie at residues 1–117, 153–172, and 210–266; these read MASK…GLNR, SSAP…GIRK, and RHFD…SSSN. The segment covering 12–23 has biased composition (basic and acidic residues); that stretch reads AKKEKEIKKEIE. The segment covering 51–70 has biased composition (acidic residues); sequence ENDDTDGDGKEEDAQKEDDI. 3 stretches are compositionally biased toward low complexity: residues 100-112, 153-167, and 241-265; these read NSPP…TRNT, SSAP…GSPS, and VPPS…TSSS.

This is an uncharacterized protein from Caenorhabditis elegans.